The following is a 280-amino-acid chain: Large ribosomal subunit protein uL2 (280 aa).

2 disordered regions span residues 1 to 58 and 226 to 280; these read MAIR…GGGH and MNPV…KHGR. Composition is skewed to basic residues over residues 37–58 and 268–280; these read LHGH…GGGH and IVRR…KHGR.

The protein belongs to the universal ribosomal protein uL2 family. Part of the 50S ribosomal subunit. Forms a bridge to the 30S subunit in the 70S ribosome.

One of the primary rRNA binding proteins. Required for association of the 30S and 50S subunits to form the 70S ribosome, for tRNA binding and peptide bond formation. It has been suggested to have peptidyltransferase activity; this is somewhat controversial. Makes several contacts with the 16S rRNA in the 70S ribosome. The chain is Large ribosomal subunit protein uL2 from Mycobacterium avium (strain 104).